Here is a 592-residue protein sequence, read N- to C-terminus: MMRTHYCGSLTEAQIDQTVTLCGWVHRRRDHGGVIFLDMRDRDGLVQVVIDPDTPEAFATADKARSEYVLKITGRVRRRYEGTENPNMVSGQIEVLGKEIEVLAASETPPFPLNDDTINVSEEHRLKYRFLDIRRPEMLERLRFRSKVTNLIRNYLDDHGFLDVETPILTRATPEGARDYLVPSRVQNGSFYALPQSPQLFKQLLMVGGIDRYYQIAKCFRDEDLRADRQPEFTQIDIETSFLNDDDIMDLMEGMTIKLFNDLLGVKFEKFRRMPYSEAMRDYASDKPDLRIPLKLVDVADLMQEVEFKVFAGPAKDPKGRIAALRVPGAGSLTRSQIDEYTKFVGIYGAKGLAYIKVNEIEKGIEGLQSPIVKFIEPIVMQLLERVGAENGDIVFFGADKAKIVNDAMGALRVKIGHDLNLATCEWAPLWVVDFPMFEETDDGKWTSVHHPFTLPKSSVEDVKSNPGEALSVAYDMVLNGTEVGGGSLRIYTLEMQKAIFEALGISDEEAEEKFSFLLNALRYGAPPHGGLAFGLDRLVMLMTGATSIRDVIAFPKTKTAECPLTQAPAPVEANQLRDLGIRLREQQKKEA.

Glu175 serves as a coordination point for L-aspartate. The segment at 199–202 (QLFK) is aspartate. Arg221 contacts L-aspartate. ATP contacts are provided by residues 221-223 (RDE) and Gln230. His450 contributes to the L-aspartate binding site. Glu483 contacts ATP. L-aspartate is bound at residue Arg490. 535–538 (GLDR) serves as a coordination point for ATP.

Belongs to the class-II aminoacyl-tRNA synthetase family. Type 1 subfamily. Homodimer.

It is found in the cytoplasm. The enzyme catalyses tRNA(Asx) + L-aspartate + ATP = L-aspartyl-tRNA(Asx) + AMP + diphosphate. Functionally, aspartyl-tRNA synthetase with relaxed tRNA specificity since it is able to aspartylate not only its cognate tRNA(Asp) but also tRNA(Asn). Reaction proceeds in two steps: L-aspartate is first activated by ATP to form Asp-AMP and then transferred to the acceptor end of tRNA(Asp/Asn). The sequence is that of Aspartate--tRNA(Asp/Asn) ligase from Acinetobacter baumannii (strain ATCC 17978 / DSM 105126 / CIP 53.77 / LMG 1025 / NCDC KC755 / 5377).